The following is a 64-amino-acid chain: Large ribosomal subunit protein bL35 (64 aa).

The disordered stretch occupies residues 1–29; that stretch reads MPKMKTHSGAKKRFKLTGSGKLRRQQANR.

Belongs to the bacterial ribosomal protein bL35 family.

In Pseudarthrobacter chlorophenolicus (strain ATCC 700700 / DSM 12829 / CIP 107037 / JCM 12360 / KCTC 9906 / NCIMB 13794 / A6) (Arthrobacter chlorophenolicus), this protein is Large ribosomal subunit protein bL35.